Here is a 595-residue protein sequence, read N- to C-terminus: 2-succinyl-5-enolpyruvyl-6-hydroxy-3-cyclohexene-1-carboxylate synthase (595 aa).

The protein belongs to the TPP enzyme family. MenD subfamily. As to quaternary structure, homodimer. Mg(2+) serves as cofactor. It depends on Mn(2+) as a cofactor. The cofactor is thiamine diphosphate.

It catalyses the reaction isochorismate + 2-oxoglutarate + H(+) = 5-enolpyruvoyl-6-hydroxy-2-succinyl-cyclohex-3-ene-1-carboxylate + CO2. It functions in the pathway quinol/quinone metabolism; 1,4-dihydroxy-2-naphthoate biosynthesis; 1,4-dihydroxy-2-naphthoate from chorismate: step 2/7. It participates in cofactor biosynthesis; phylloquinone biosynthesis. In terms of biological role, catalyzes the thiamine diphosphate-dependent decarboxylation of 2-oxoglutarate and the subsequent addition of the resulting succinic semialdehyde-thiamine pyrophosphate anion to isochorismate to yield 2-succinyl-5-enolpyruvyl-6-hydroxy-3-cyclohexene-1-carboxylate (SEPHCHC). This chain is 2-succinyl-5-enolpyruvyl-6-hydroxy-3-cyclohexene-1-carboxylate synthase, found in Synechocystis sp. (strain ATCC 27184 / PCC 6803 / Kazusa).